Reading from the N-terminus, the 365-residue chain is DNA polymerase IV (365 aa).

The UmuC domain occupies 14 to 198 (IIHIDMDAFF…LPIEKFHGVG (185 aa)). Residues aspartate 18 and aspartate 116 each contribute to the Mg(2+) site. Glutamate 117 is an active-site residue.

The protein belongs to the DNA polymerase type-Y family. As to quaternary structure, monomer. Mg(2+) serves as cofactor.

It is found in the cytoplasm. The enzyme catalyses DNA(n) + a 2'-deoxyribonucleoside 5'-triphosphate = DNA(n+1) + diphosphate. Poorly processive, error-prone DNA polymerase involved in untargeted mutagenesis. Copies undamaged DNA at stalled replication forks, which arise in vivo from mismatched or misaligned primer ends. These misaligned primers can be extended by PolIV. Exhibits no 3'-5' exonuclease (proofreading) activity. May be involved in translesional synthesis, in conjunction with the beta clamp from PolIII. The protein is DNA polymerase IV of Streptococcus pyogenes serotype M3 (strain ATCC BAA-595 / MGAS315).